A 552-amino-acid polypeptide reads, in one-letter code: MTSSRIVRAPRGSELSCKGWAQEAALRMLMNNLDPDVAEDPQNLIVYGGTGKAARNWQCFDAIVRSLQELNDDETLLVQSGKPVAVFRSHRDAPRVLIANSMLVPHWATWENFRELEQAGLTMYGQMTAGSWIYIGTQGILQGTYETLAAIARQHFGGSLRGRWTLTAGLGGMGGAQPLAVTMNDGVALVVEVDRQRMQRRLDTRYLDVAVDTLEEAMTLVDEAVRDGKALSVGLLGNAAEVFGELYKRGVRPDIVTDQTSAHDPLEGYVPAGMSLEQALELRQRDPEEYVKHSTASMVEHVKAMVAFADAGSIVFDYGNNLRGVAKAAGYDRAFAYPGFVPAYIRPLFCEGKGPFRWAALSGDPADIAKTDEALLELFPEDQALHRWIRAAQERVQFQGLPARICWLGYGERAKAGALFNKLVRDGVVSAPIVIGRDHLDCGSVASPNRETEAMRDGSDAIGDWPILNAMINAVNGATWVSVHHGGGVGIGYSLHAGMVIVADGTAEADHRLERVLTSDPGMGVVRHVDAGYDEAIAVAQERNVHIPMLKQ.

Residues 48-49 (GG), Gln-126, 172-174 (GMG), Glu-192, Arg-197, 238-239 (NA), 259-263 (QTSAH), 269-270 (YV), and Tyr-318 each bind NAD(+). Cys-406 is a catalytic residue. Gly-488 lines the NAD(+) pocket.

It belongs to the urocanase family. NAD(+) is required as a cofactor.

The protein resides in the cytoplasm. It catalyses the reaction 4-imidazolone-5-propanoate = trans-urocanate + H2O. It participates in amino-acid degradation; L-histidine degradation into L-glutamate; N-formimidoyl-L-glutamate from L-histidine: step 2/3. Functionally, catalyzes the conversion of urocanate to 4-imidazolone-5-propionate. In Herpetosiphon aurantiacus (strain ATCC 23779 / DSM 785 / 114-95), this protein is Urocanate hydratase.